The sequence spans 664 residues: Intraflagellar transport protein 70B (664 aa).

7 TPR repeats span residues 11 to 44 (DGEF…SPRS), 45 to 78 (RAGL…HPEL), 153 to 186 (LDGQ…SGYR), 188 to 220 (DLSY…GIRQ), 385 to 418 (LTEQ…YEDT), 423 to 456 (IPVL…CNDH), and 458 to 491 (VWKL…HYDN). Residues 509 to 532 (MISQNEEAEELMRKIGKEEEQLSY) are a coiled coil. The TPR 8 repeat unit spans residues 543 to 576 (CIVNLVIGTLYCAKGNYDFGISRVIKSLEPCNKK).

Belongs to the TTC30/dfy-1/fleer family. Interacts with the IFT B complex components IFT27, IFT46, IFT74, IFT52, IFT57, IFT80, IFT81 and IFT88. Interacts with KIF17.

The protein localises to the cell projection. The protein resides in the cilium. In terms of biological role, required for polyglutamylation of axonemal tubulin. Plays a role in anterograde intraflagellar transport (IFT), the process by which cilia precursors are transported from the base of the cilium to the site of their incorporation at the tip. This Bos taurus (Bovine) protein is Intraflagellar transport protein 70B (IFT70B).